The chain runs to 128 residues: Cystatin-12 (128 aa).

Positions 1 to 21 (MLWKSVLSVALIVLGIHDCSF) are cleaved as a signal peptide. 2 cysteine pairs are disulfide-bonded: cysteine 82–cysteine 92 and cysteine 105–cysteine 125. Asparagine 122 is a glycosylation site (N-linked (GlcNAc...) asparagine).

Belongs to the cystatin family. As to expression, located at the very proximal caput epididymis (at protein level). Expressed in epididymis, Sertoli cells and testis. Also found to be weakly expressed in ovary and prostate.

The protein localises to the secreted. May play a specialized role in spermatogenesis. The chain is Cystatin-12 (Cst12) from Mus musculus (Mouse).